Consider the following 234-residue polypeptide: Ribosomal RNA small subunit methyltransferase G (234 aa).

S-adenosyl-L-methionine-binding positions include G74, F79, 125 to 126, and R144; that span reads AE.

This sequence belongs to the methyltransferase superfamily. RNA methyltransferase RsmG family.

The protein localises to the cytoplasm. Its function is as follows. Specifically methylates the N7 position of a guanine in 16S rRNA. The sequence is that of Ribosomal RNA small subunit methyltransferase G from Roseiflexus sp. (strain RS-1).